The following is a 129-amino-acid chain: Regulator of ribonuclease activity B (129 aa).

Belongs to the RraB family. Interacts with the C-terminal region of Rne.

The protein resides in the cytoplasm. In terms of biological role, globally modulates RNA abundance by binding to RNase E (Rne) and regulating its endonucleolytic activity. Can modulate Rne action in a substrate-dependent manner by altering the composition of the degradosome. This Shewanella denitrificans (strain OS217 / ATCC BAA-1090 / DSM 15013) protein is Regulator of ribonuclease activity B.